We begin with the raw amino-acid sequence, 117 residues long: Large ribosomal subunit protein uL18 (117 aa).

This sequence belongs to the universal ribosomal protein uL18 family. In terms of assembly, part of the 50S ribosomal subunit; part of the 5S rRNA/L5/L18/L25 subcomplex. Contacts the 5S and 23S rRNAs.

Functionally, this is one of the proteins that bind and probably mediate the attachment of the 5S RNA into the large ribosomal subunit, where it forms part of the central protuberance. In Polynucleobacter asymbioticus (strain DSM 18221 / CIP 109841 / QLW-P1DMWA-1) (Polynucleobacter necessarius subsp. asymbioticus), this protein is Large ribosomal subunit protein uL18.